Here is a 263-residue protein sequence, read N- to C-terminus: uncharacterized protein (263 aa).

The next 7 membrane-spanning stretches (helical) occupy residues 53-73 (FWII…LVKI), 103-123 (GFLF…LPGL), 130-150 (IILP…VFSY), 153-173 (LIPA…EPLW), 181-201 (FILV…IQIL), 213-233 (MLAA…ILTP), and 241-261 (LLLS…LFLI).

It belongs to the TatC family.

The protein resides in the plastid. It is found in the chloroplast membrane. This is an uncharacterized protein from Trieres chinensis (Marine centric diatom).